The chain runs to 311 residues: MTKIIFMGTPDFSTTVLEMLIAEHDVIAVVTQPDRPVGRKRVMTPPPVKKVAMKYDLPVYQPEKLSGSEELEQLLQLDVDLIVTAAFGQLLPESLLALPKLGAINVHASLLPKYRGGAPIHQAIIDGEQETGITIMYMVKKLDAGNIISQQAIKIEENDNVGTMHDKLSVLGADLLKETLPSIIEGTNESVPQDDTQATFASNIRREDERISWNKPGRQVFNQIRGLSPWPVAYTTMDDTNLKIYDAELVETNKINEPGTIIETTKKAIIVATNDNEAVAIKDMQLAGKKRMLAANYLSGAQNILVGKKLI.

109 to 112 (SLLP) serves as a coordination point for (6S)-5,6,7,8-tetrahydrofolate.

The protein belongs to the Fmt family.

It carries out the reaction L-methionyl-tRNA(fMet) + (6R)-10-formyltetrahydrofolate = N-formyl-L-methionyl-tRNA(fMet) + (6S)-5,6,7,8-tetrahydrofolate + H(+). Functionally, attaches a formyl group to the free amino group of methionyl-tRNA(fMet). The formyl group appears to play a dual role in the initiator identity of N-formylmethionyl-tRNA by promoting its recognition by IF2 and preventing the misappropriation of this tRNA by the elongation apparatus. The sequence is that of Methionyl-tRNA formyltransferase from Staphylococcus aureus (strain bovine RF122 / ET3-1).